The sequence spans 379 residues: Cytoplasmic tRNA 2-thiolation protein 1 (379 aa).

Belongs to the TtcA family. CTU1/NCS6/ATPBD3 subfamily.

The protein resides in the cytoplasm. It participates in tRNA modification; 5-methoxycarbonylmethyl-2-thiouridine-tRNA biosynthesis. Its function is as follows. Plays a central role in 2-thiolation of mcm(5)S(2)U at tRNA wobble positions of tRNA(Lys), tRNA(Glu) and tRNA(Gln). Directly binds tRNAs and probably acts by catalyzing adenylation of tRNAs, an intermediate required for 2-thiolation. It is unclear whether it acts as a sulfurtransferase that transfers sulfur from thiocarboxylated URM1 onto the uridine of tRNAs at wobble position. Prior mcm(5) tRNA modification by the elongator complex is required for 2-thiolation. May also be involved in protein urmylation. This Lodderomyces elongisporus (strain ATCC 11503 / CBS 2605 / JCM 1781 / NBRC 1676 / NRRL YB-4239) (Yeast) protein is Cytoplasmic tRNA 2-thiolation protein 1.